We begin with the raw amino-acid sequence, 202 residues long: Putative NADH dehydrogenase/NAD(P)H nitroreductase SCO7141 (202 aa).

Belongs to the nitroreductase family. HadB/RutE subfamily. FMN serves as cofactor.

This is Putative NADH dehydrogenase/NAD(P)H nitroreductase SCO7141 from Streptomyces coelicolor (strain ATCC BAA-471 / A3(2) / M145).